Reading from the N-terminus, the 516-residue chain is Methionine--tRNA ligase (516 aa).

The 'HIGH' region motif lies at 13-23 (FYPNGKPHIGH). Positions 299–303 (KMSKS) match the 'KMSKS' region motif. Lysine 302 is a binding site for ATP.

Belongs to the class-I aminoacyl-tRNA synthetase family. MetG type 2B subfamily. Monomer.

Its subcellular location is the cytoplasm. It catalyses the reaction tRNA(Met) + L-methionine + ATP = L-methionyl-tRNA(Met) + AMP + diphosphate. In terms of biological role, is required not only for elongation of protein synthesis but also for the initiation of all mRNA translation through initiator tRNA(fMet) aminoacylation. The polypeptide is Methionine--tRNA ligase (Mesorhizobium japonicum (strain LMG 29417 / CECT 9101 / MAFF 303099) (Mesorhizobium loti (strain MAFF 303099))).